Reading from the N-terminus, the 298-residue chain is Protoheme IX farnesyltransferase (298 aa).

The next 8 membrane-spanning stretches (helical) occupy residues 16–36 (VVAL…PGMP), 45–65 (ALGF…NQLL), 97–117 (VLIV…TAVL), 141–161 (IVIG…AVTG), 172–192 (SLLV…LAIF), 223–243 (VLLA…VFYL), 244–264 (GGAV…LDPP), and 277–297 (VVYL…LPWV).

Belongs to the UbiA prenyltransferase family. Protoheme IX farnesyltransferase subfamily.

The protein localises to the cell inner membrane. It carries out the reaction heme b + (2E,6E)-farnesyl diphosphate + H2O = Fe(II)-heme o + diphosphate. The protein operates within porphyrin-containing compound metabolism; heme O biosynthesis; heme O from protoheme: step 1/1. In terms of biological role, converts heme B (protoheme IX) to heme O by substitution of the vinyl group on carbon 2 of heme B porphyrin ring with a hydroxyethyl farnesyl side group. The sequence is that of Protoheme IX farnesyltransferase from Xanthomonas campestris pv. campestris (strain 8004).